The primary structure comprises 477 residues: V-type ATP synthase beta chain (477 aa).

Belongs to the ATPase alpha/beta chains family.

Its function is as follows. Produces ATP from ADP in the presence of a proton gradient across the membrane. The V-type beta chain is a regulatory subunit. The protein is V-type ATP synthase beta chain of Anaeromyxobacter sp. (strain K).